Reading from the N-terminus, the 341-residue chain is Dimethylsulfoniopropionate lyase 7 (341 aa).

Composition is skewed to basic and acidic residues over residues Met-1–Glu-10 and Glu-319–Lys-328. Disordered regions lie at residues Met-1–Phe-24 and Glu-319–Ala-341.

Belongs to the aspartate/glutamate racemases family. ALMA1 subfamily. In terms of assembly, homotetramer.

It carries out the reaction S,S-dimethyl-beta-propiothetin = acrylate + dimethyl sulfide + H(+). In terms of biological role, mediates cleavage of dimethylsulfoniopropionate (DMSP) into dimethyl sulfide (DMS) and acrylate. DMS is the principal form by which sulfur is transported from oceans to the atmosphere and is a key component of the ocean sulfur cycle. The polypeptide is Dimethylsulfoniopropionate lyase 7 (Emiliania huxleyi (strain CCMP1516)).